Consider the following 341-residue polypeptide: MTKITVIGAGSWGTALAMVLADNGHDVRIWGNRPELMDEINTKHENKRYLPGITLPSTIVAYSSLEEALVDVSTVLLVVPTKAYREVLQDMKKVISGPMTWIHASKGIEPGTSKRISEMIEEEIPEHLIRDVVVLSGPSHAEEVALRQATTVTSAAKRMEAAEEVQDLFMNHYFRVYTNPDIIGVELGGALKNIIALAAGITDGLGLGDNAKAALMTRGLTEIARLGRKMGGNPLTFAGLTGMGDLIVTCTSVHSRNWRAGNMLGKGHSLEEVLDSMGMVVEGVRTTKAAYELAEKMEVEMPITAALYDVLFNGKNVKDAVGSLMGRVRKHEVEAIPDLSR.

Residues Ser11, Trp12, Arg33, and Lys106 each coordinate NADPH. Sn-glycerol 3-phosphate-binding residues include Lys106, Gly137, and Ser139. NADPH is bound at residue Ala141. Residues Lys192, Asp245, Ser255, Arg256, and Asn257 each contribute to the sn-glycerol 3-phosphate site. Lys192 serves as the catalytic Proton acceptor. An NADPH-binding site is contributed by Arg256. Residues Val280 and Glu282 each coordinate NADPH.

This sequence belongs to the NAD-dependent glycerol-3-phosphate dehydrogenase family.

Its subcellular location is the cytoplasm. It carries out the reaction sn-glycerol 3-phosphate + NAD(+) = dihydroxyacetone phosphate + NADH + H(+). The catalysed reaction is sn-glycerol 3-phosphate + NADP(+) = dihydroxyacetone phosphate + NADPH + H(+). It participates in membrane lipid metabolism; glycerophospholipid metabolism. Catalyzes the reduction of the glycolytic intermediate dihydroxyacetone phosphate (DHAP) to sn-glycerol 3-phosphate (G3P), the key precursor for phospholipid synthesis. In Bacillus cytotoxicus (strain DSM 22905 / CIP 110041 / 391-98 / NVH 391-98), this protein is Glycerol-3-phosphate dehydrogenase [NAD(P)+].